A 90-amino-acid polypeptide reads, in one-letter code: Small ribosomal subunit protein bS18 (90 aa).

This sequence belongs to the bacterial ribosomal protein bS18 family. Part of the 30S ribosomal subunit. Forms a tight heterodimer with protein bS6.

Binds as a heterodimer with protein bS6 to the central domain of the 16S rRNA, where it helps stabilize the platform of the 30S subunit. In Bacteroides fragilis (strain YCH46), this protein is Small ribosomal subunit protein bS18.